Consider the following 362-residue polypeptide: MAQHDPIGLIAPNAGLAQLNERSREIFRQIVESYLATGEPVGSRNISRLISVPLSPASVRNVMADLEQLGLIYAPHTSAGRLPTELGLRFFVDALMQIGDLTEPERQSIQAQLSSVGRAHTVEAALGEALTRLSGLTRAAAVVLTAKANVRLKHIEFVRLEPERALVILVAEDGQVENRVLTLPPGVPSSALIEAANYLNARIRGRTLAEARLELESLMVQNKAELDQLTQKVIAAGIASWSGGDGEDRQLIVRGHANLLEDLHALDDLERVRLLFDDLETKRGVIDLLGRAESADGVRIFIGSENKLFSLSGSSTIIAPYSDGAGHIVGVLGVIGPTRLNYARVIPMVDYTARIVSRMLGG.

Belongs to the HrcA family.

Its function is as follows. Negative regulator of class I heat shock genes (grpE-dnaK-dnaJ and groELS operons). Prevents heat-shock induction of these operons. This chain is Heat-inducible transcription repressor HrcA, found in Rhodopseudomonas palustris (strain ATCC BAA-98 / CGA009).